Here is a 398-residue protein sequence, read N- to C-terminus: Acetyl-CoA acetyltransferase erg10B, cytosolic (398 aa).

The Acyl-thioester intermediate role is filled by cysteine 92. Residue tyrosine 187 coordinates K(+). The CoA site is built by asparagine 229 and lysine 232. K(+) contacts are provided by alanine 249, proline 250, and serine 252. Serine 253 contributes to the CoA binding site. Valine 350 contacts K(+). Residues histidine 354 and cysteine 384 each act as proton acceptor in the active site. Asparagine 385 is a binding site for chloride.

It belongs to the thiolase-like superfamily. Thiolase family. In terms of assembly, homotetramer. It depends on K(+) as a cofactor.

The protein localises to the cytoplasm. It localises to the cytosol. The catalysed reaction is 2 acetyl-CoA = acetoacetyl-CoA + CoA. It functions in the pathway metabolic intermediate biosynthesis; (R)-mevalonate biosynthesis; (R)-mevalonate from acetyl-CoA: step 1/3. Its activity is regulated as follows. Activity is increased by monovalent cations such as K(+), Rb(+) or Cs(+). Its function is as follows. Acetyl-CoA acetyltransferase; part of the first module of ergosterol biosynthesis pathway that includes the early steps of the pathway, conserved across all eukaryotes, and which results in the formation of mevalonate from acetyl-coenzyme A (acetyl-CoA). In this module, the cytosolic acetyl-CoA acetyltransferase erg10B catalyzes the formation of acetoacetyl-CoA. The hydroxymethylglutaryl-CoA synthases AFUA_8G07210 and AFUA_3G10660 then condense acetyl-CoA with acetoacetyl-CoA to form HMG-CoA. The rate-limiting step of the early module is the reduction to mevalonate by the 3-hydroxy-3-methylglutaryl-coenzyme A (HMG-CoA) reductases hmg1 and hmg2. Mevalonate is also a precursor for the extracellular siderophore triacetylfusarinine C (TAFC). In Aspergillus fumigatus (strain CBS 144.89 / FGSC A1163 / CEA10) (Neosartorya fumigata), this protein is Acetyl-CoA acetyltransferase erg10B, cytosolic.